Reading from the N-terminus, the 391-residue chain is Phosphoglycerate kinase (391 aa).

Substrate is bound by residues 21–23 (DLN), Arg36, 59–62 (HLGR), Arg113, and Arg146. ATP is bound by residues Lys197, Glu319, and 345–348 (GGDT).

Belongs to the phosphoglycerate kinase family. In terms of assembly, monomer.

Its subcellular location is the cytoplasm. It catalyses the reaction (2R)-3-phosphoglycerate + ATP = (2R)-3-phospho-glyceroyl phosphate + ADP. Its pathway is carbohydrate degradation; glycolysis; pyruvate from D-glyceraldehyde 3-phosphate: step 2/5. This is Phosphoglycerate kinase from Shewanella baltica (strain OS195).